The chain runs to 75 residues: Exodeoxyribonuclease 7 small subunit (75 aa).

This sequence belongs to the XseB family. Heterooligomer composed of large and small subunits.

The protein localises to the cytoplasm. The catalysed reaction is Exonucleolytic cleavage in either 5'- to 3'- or 3'- to 5'-direction to yield nucleoside 5'-phosphates.. In terms of biological role, bidirectionally degrades single-stranded DNA into large acid-insoluble oligonucleotides, which are then degraded further into small acid-soluble oligonucleotides. This Anaplasma phagocytophilum (strain HZ) protein is Exodeoxyribonuclease 7 small subunit.